Here is a 245-residue protein sequence, read N- to C-terminus: Glycerophosphodiester phosphodiesterase (245 aa).

In terms of domain architecture, GP-PDE spans 2–241 (TKIFAHRGFK…DFPDRAVKIR (240 aa)). Histidine 7 acts as the Proton acceptor in catalysis. A divalent metal cation is bound by residues glutamate 34 and aspartate 36. Histidine 49 serves as the catalytic Proton donor. Residue glutamate 110 participates in a divalent metal cation binding.

This sequence belongs to the glycerophosphoryl diester phosphodiesterase family. It depends on Ni(2+) as a cofactor. Co(2+) serves as cofactor. Mn(2+) is required as a cofactor.

It catalyses the reaction a sn-glycero-3-phosphodiester + H2O = an alcohol + sn-glycerol 3-phosphate + H(+). With respect to regulation, inhibited by EDTA and various organic solvents such as chloroform, toluene or benzene. In terms of biological role, glycerophosphodiester phosphodiesterase hydrolyzes glycerophosphodiesters into glycerol-3-phosphate (G3P) and the corresponding alcohol. Can hydrolyze the model substrate bis-(p-nitrophenyl phosphate) (bis(pNPP)) to p-nitrophenol. Can also catalyze the degradation of diphenyl phosphate (DPHP) to phenyl phosphate (PHP). DPHP is an aryl phosphate ester used as a chemical additive and an industrial catalyst that can easily spread to the environment and exhibits toxicity toward organisms. The polypeptide is Glycerophosphodiester phosphodiesterase (Bacillus altitudinis).